Reading from the N-terminus, the 199-residue chain is MRVVVATGNAGKVREIAEALSELGWQLEGLNGLTLPEETGTTYEENAALKACAAALAKGLPALADDSGLEVAALDGQPGVYSARFGNRPNDTERNLYLLEKLRGVQDRRAKFVSVVMLAYPDGHVETYRGELTGTLLEGPRGENGFGYDPLFVPDGETRTLAEMTVAEKRTISHRGRALAALLATHRNGPPPRETVRTE.

Residue Thr7–Lys12 coordinates substrate. Residues Glu37 and Asp66 each coordinate Mg(2+). Catalysis depends on Asp66, which acts as the Proton acceptor. Substrate contacts are provided by residues Ser67, Phe146–Asp149, Lys169, and His174–Arg175.

The protein belongs to the HAM1 NTPase family. In terms of assembly, homodimer. Mg(2+) is required as a cofactor.

It catalyses the reaction XTP + H2O = XMP + diphosphate + H(+). The enzyme catalyses dITP + H2O = dIMP + diphosphate + H(+). It carries out the reaction ITP + H2O = IMP + diphosphate + H(+). In terms of biological role, pyrophosphatase that catalyzes the hydrolysis of nucleoside triphosphates to their monophosphate derivatives, with a high preference for the non-canonical purine nucleotides XTP (xanthosine triphosphate), dITP (deoxyinosine triphosphate) and ITP. Seems to function as a house-cleaning enzyme that removes non-canonical purine nucleotides from the nucleotide pool, thus preventing their incorporation into DNA/RNA and avoiding chromosomal lesions. This Deinococcus geothermalis (strain DSM 11300 / CIP 105573 / AG-3a) protein is dITP/XTP pyrophosphatase.